Here is a 439-residue protein sequence, read N- to C-terminus: Indole-3-pyruvate monooxygenase YUCCA4 (439 aa).

49 to 54 (GAGPAG) provides a ligand contact to FAD. 226-231 (GCGNSG) serves as a coordination point for NADP(+).

Belongs to the FMO family. The cofactor is FAD.

The catalysed reaction is indole-3-pyruvate + NADPH + O2 + H(+) = (indol-3-yl)acetate + CO2 + NADP(+) + H2O. Functionally, involved in auxin biosynthesis in anthers. The chain is Indole-3-pyruvate monooxygenase YUCCA4 from Oryza sativa subsp. japonica (Rice).